The chain runs to 538 residues: Cytochrome P450 monooxygenase astC (538 aa).

The chain crosses the membrane as a helical span at residues 18–38 (ALMLPALVGCALLIYRAFFAI). C481 is a heme binding site.

The protein belongs to the cytochrome P450 family. It depends on heme as a cofactor.

It localises to the membrane. It participates in secondary metabolite biosynthesis; terpenoid biosynthesis. Cytochrome P450 monooxygenase; part of the gene cluster that mediates the biosynthesis of the sesquiterpenoid aspterric acid (AA), an inhibitor of dihydroxy-acid dehydratase (DHAD) effective as an herbicide. AstC catalyzes the third and last step within the pathway and converts the alpha-epoxy carboxylate intermediate produced by the cytochrome P450 monooxygenase astC from (-)daucane into the tricyclic aspterric acid. The polypeptide is Cytochrome P450 monooxygenase astC (Aspergillus terreus (strain NIH 2624 / FGSC A1156)).